Reading from the N-terminus, the 145-residue chain is Peroxide operon regulator (145 aa).

Residues methionine 1 to glycine 78 form a DNA-binding region. 4 residues coordinate Zn(2+): cysteine 96, cysteine 99, cysteine 136, and cysteine 139.

The protein belongs to the Fur family. As to quaternary structure, homodimer. It depends on Mn(2+) as a cofactor. Fe(2+) is required as a cofactor. Requires Zn(2+) as cofactor. Possibly oxidized on a cysteine residue; the Cys-SOH formed in response to oxidative signaling may rapidly react with a Cys-SH to form a disulfide bond, leading to the loss of metal ion and inactivation of repressor function. Oxidized PerR can be further reduced by thiol reductants and repressor activity restored.

It is found in the cytoplasm. Hydrogen and organic peroxide sensor. Represses the expression of a regulon of peroxide-inducible genes such as katA, ahpC, ahpF, the heme biosynthesis operon (hemAXCDBL), fur, perR, zosA and mrgA. The chain is Peroxide operon regulator (perR) from Bacillus subtilis (strain 168).